A 225-amino-acid polypeptide reads, in one-letter code: ATP phosphoribosyltransferase (225 aa).

This sequence belongs to the ATP phosphoribosyltransferase family. Short subfamily. In terms of assembly, heteromultimer composed of HisG and HisZ subunits.

The protein resides in the cytoplasm. It catalyses the reaction 1-(5-phospho-beta-D-ribosyl)-ATP + diphosphate = 5-phospho-alpha-D-ribose 1-diphosphate + ATP. It participates in amino-acid biosynthesis; L-histidine biosynthesis; L-histidine from 5-phospho-alpha-D-ribose 1-diphosphate: step 1/9. Catalyzes the condensation of ATP and 5-phosphoribose 1-diphosphate to form N'-(5'-phosphoribosyl)-ATP (PR-ATP). Has a crucial role in the pathway because the rate of histidine biosynthesis seems to be controlled primarily by regulation of HisG enzymatic activity. The sequence is that of ATP phosphoribosyltransferase from Herminiimonas arsenicoxydans.